Reading from the N-terminus, the 139-residue chain is HTH-type transcriptional repressor Mb2911 (139 aa).

The HTH marR-type domain maps to 6-138 (DAPLGYLLYR…FKRMLEKLGS (133 aa)).

As to quaternary structure, homodimer.

In terms of biological role, represses expression of the HQNO methyltransferase htm gene by binding to its promoter region. The protein is HTH-type transcriptional repressor Mb2911 of Mycobacterium bovis (strain ATCC BAA-935 / AF2122/97).